Reading from the N-terminus, the 152-residue chain is Superoxide dismutase [Cu-Zn] 4AP (152 aa).

The Cu cation site is built by H45, H47, and H62. A disulfide bridge links C56 with C145. H62, H70, H79, and D82 together coordinate Zn(2+). H119 contributes to the Cu cation binding site.

Belongs to the Cu-Zn superoxide dismutase family. In terms of assembly, homodimer. Cu cation is required as a cofactor. The cofactor is Zn(2+).

The protein resides in the cytoplasm. The catalysed reaction is 2 superoxide + 2 H(+) = H2O2 + O2. In terms of biological role, destroys radicals which are normally produced within the cells and which are toxic to biological systems. The protein is Superoxide dismutase [Cu-Zn] 4AP (SODCC.2) of Zea mays (Maize).